A 317-amino-acid chain; its full sequence is Beta-ketoacyl-[acyl-carrier-protein] synthase III (317 aa).

Catalysis depends on residues Cys112 and His244. The ACP-binding stretch occupies residues 245–249 (QANLR). Asn274 is a catalytic residue.

This sequence belongs to the thiolase-like superfamily. FabH family. In terms of assembly, homodimer.

The protein localises to the cytoplasm. The enzyme catalyses malonyl-[ACP] + acetyl-CoA + H(+) = 3-oxobutanoyl-[ACP] + CO2 + CoA. The protein operates within lipid metabolism; fatty acid biosynthesis. Its function is as follows. Catalyzes the condensation reaction of fatty acid synthesis by the addition to an acyl acceptor of two carbons from malonyl-ACP. Catalyzes the first condensation reaction which initiates fatty acid synthesis and may therefore play a role in governing the total rate of fatty acid production. Possesses both acetoacetyl-ACP synthase and acetyl transacylase activities. Its substrate specificity determines the biosynthesis of branched-chain and/or straight-chain of fatty acids. The sequence is that of Beta-ketoacyl-[acyl-carrier-protein] synthase III from Salmonella arizonae (strain ATCC BAA-731 / CDC346-86 / RSK2980).